A 193-amino-acid polypeptide reads, in one-letter code: NADPH:quinone oxidoreductase MdaB (193 aa).

FAD contacts are provided by residues serine 16–threonine 23, glycine 69–methionine 72, tyrosine 108, and threonine 124–alanine 127.

Belongs to the oxidoreductase MdaB family. Homodimer. FAD serves as cofactor.

It localises to the cytoplasm. It carries out the reaction a quinone + NADPH + H(+) = a quinol + NADP(+). Functionally, NADPH-specific quinone reductase. This chain is NADPH:quinone oxidoreductase MdaB, found in Escherichia coli O157:H7.